We begin with the raw amino-acid sequence, 445 residues long: Exodeoxyribonuclease 7 large subunit (445 aa).

Belongs to the XseA family. As to quaternary structure, heterooligomer composed of large and small subunits.

It localises to the cytoplasm. It carries out the reaction Exonucleolytic cleavage in either 5'- to 3'- or 3'- to 5'-direction to yield nucleoside 5'-phosphates.. In terms of biological role, bidirectionally degrades single-stranded DNA into large acid-insoluble oligonucleotides, which are then degraded further into small acid-soluble oligonucleotides. The polypeptide is Exodeoxyribonuclease 7 large subunit (Xanthomonas axonopodis pv. citri (strain 306)).